We begin with the raw amino-acid sequence, 805 residues long: Leucine--tRNA ligase (805 aa).

Positions 41–52 (PYPSGAGLHVGH) match the 'HIGH' region motif. The short motif at 577–581 (KMSKS) is the 'KMSKS' region element. K580 contributes to the ATP binding site.

The protein belongs to the class-I aminoacyl-tRNA synthetase family.

The protein localises to the cytoplasm. It catalyses the reaction tRNA(Leu) + L-leucine + ATP = L-leucyl-tRNA(Leu) + AMP + diphosphate. This chain is Leucine--tRNA ligase, found in Staphylococcus aureus (strain USA300).